We begin with the raw amino-acid sequence, 317 residues long: Apolipoprotein E (317 aa).

The first 18 residues, 1–18, serve as a signal peptide directing secretion; it reads MKVLWAALLVTFLAGCQA. 8 consecutive repeat copies span residues 80–101, 102–123, 124–145, 146–167, 168–189, 190–211, 212–233, and 234–255. The segment at 80–255 is 8 X 22 AA approximate tandem repeats; sequence TLMDETMKEL…RLDEVKEQVA (176 aa). A Methionine sulfoxide modification is found at Met143. At Ser147 the chain carries Phosphoserine. The interval 158 to 168 is LDL and other lipoprotein receptors binding; that stretch reads HLRKLRKRLLR. 162-165 contacts heparin; the sequence is LRKR. The segment at 210–290 is lipid-binding and lipoprotein association; the sequence is AATVGSLAGQ…SWFEPLVEDM (81 aa). 229 to 236 serves as a coordination point for heparin; it reads GERLRARM. Residues 266–317 form a homooligomerization region; the sequence is QQISLQAEAFQARLKSWFEPLVEDMQRQWAGLVEKVQAAVGASTAPVPSDNH. The segment at 278–290 is specificity for association with VLDL; sequence RLKSWFEPLVEDM.

This sequence belongs to the apolipoprotein A1/A4/E family. Homotetramer. May interact with ABCA1; functionally associated with ABCA1 in the biogenesis of HDLs. May interact with APP/A4 amyloid-beta peptide; the interaction is extremely stable in vitro but its physiological significance is unclear. May interact with MAPT. May interact with MAP2. In the cerebrospinal fluid, interacts with secreted SORL1. Interacts with PMEL; this allows the loading of PMEL luminal fragment on ILVs to induce fibril nucleation. In terms of processing, APOE exists as multiple glycosylated and sialylated glycoforms within cells and in plasma. The extent of glycosylation and sialylation are tissue and context specific. Post-translationally, glycated in plasma VLDL. Phosphorylated by FAM20C in the extracellular medium.

Its subcellular location is the secreted. It localises to the extracellular space. It is found in the extracellular matrix. The protein localises to the extracellular vesicle. The protein resides in the endosome. Its subcellular location is the multivesicular body. Its function is as follows. APOE is an apolipoprotein, a protein associating with lipid particles, that mainly functions in lipoprotein-mediated lipid transport between organs via the plasma and interstitial fluids. APOE is a core component of plasma lipoproteins and is involved in their production, conversion and clearance. Apolipoproteins are amphipathic molecules that interact both with lipids of the lipoprotein particle core and the aqueous environment of the plasma. As such, APOE associates with chylomicrons, chylomicron remnants, very low density lipoproteins (VLDL) and intermediate density lipoproteins (IDL) but shows a preferential binding to high-density lipoproteins (HDL). It also binds a wide range of cellular receptors including the LDL receptor/LDLR, the LDL receptor-related proteins LRP1, LRP2 and LRP8 and the very low-density lipoprotein receptor/VLDLR that mediate the cellular uptake of the APOE-containing lipoprotein particles. Finally, APOE also has a heparin-binding activity and binds heparan-sulfate proteoglycans on the surface of cells, a property that supports the capture and the receptor-mediated uptake of APOE-containing lipoproteins by cells. A main function of APOE is to mediate lipoprotein clearance through the uptake of chylomicrons, VLDLs, and HDLs by hepatocytes. APOE is also involved in the biosynthesis by the liver of VLDLs as well as their uptake by peripheral tissues ensuring the delivery of triglycerides and energy storage in muscle, heart and adipose tissues. By participating in the lipoprotein-mediated distribution of lipids among tissues, APOE plays a critical role in plasma and tissues lipid homeostasis. APOE is also involved in two steps of reverse cholesterol transport, the HDLs-mediated transport of cholesterol from peripheral tissues to the liver, and thereby plays an important role in cholesterol homeostasis. First, it is functionally associated with ABCA1 in the biogenesis of HDLs in tissues. Second, it is enriched in circulating HDLs and mediates their uptake by hepatocytes. APOE also plays an important role in lipid transport in the central nervous system, regulating neuron survival and sprouting. The chain is Apolipoprotein E (APOE) from Colobus guereza (Mantled guereza).